The sequence spans 247 residues: Programmed cell death 1 ligand 2 (247 aa).

The signal sequence occupies residues 1 to 19 (MLLLLPILNLSLQLHPVAA). The Extracellular segment spans residues 20–221 (LFTVTAPKEV…RMEPKVPRTW (202 aa)). The region spanning 21–118 (FTVTAPKEVY…AWDYKYLTVK (98 aa)) is the Ig-like V-type domain. Intrachain disulfides connect C42–C102 and C143–C192. 4 N-linked (GlcNAc...) asparagine glycosylation sites follow: N64, N157, N163, and N189. One can recognise an Ig-like C2-type domain in the interval 122–203 (SYMRIDTRIL…FWNAHMKELT (82 aa)). A helical membrane pass occupies residues 222-242 (PLHVFIPACTIALIFLAIVII). Residues 243–247 (QRKRI) are Cytoplasmic-facing.

It belongs to the immunoglobulin superfamily. BTN/MOG family. In terms of assembly, interacts with PDCD1. In terms of tissue distribution, expressed in immature and mature bone marrow-derived dendritic cells and splenic dendritic cells. Highly expressed in placenta, liver and weakly expressed in heart, spleen, lymph nodes and thymus. Also expressed in some tumor cell lines of lymphoid origin.

It localises to the cell membrane. Functionally, involved in the costimulatory signal essential for T-cell proliferation and IFNG production in a PDCD1-independent manner. Interaction with PDCD1 inhibits T-cell proliferation by blocking cell cycle progression and cytokine production. This chain is Programmed cell death 1 ligand 2 (Pdcd1lg2), found in Mus musculus (Mouse).